Here is a 618-residue protein sequence, read N- to C-terminus: Proline--tRNA ligase (618 aa).

This sequence belongs to the class-II aminoacyl-tRNA synthetase family. ProS type 1 subfamily. As to quaternary structure, homodimer.

The protein resides in the cytoplasm. It carries out the reaction tRNA(Pro) + L-proline + ATP = L-prolyl-tRNA(Pro) + AMP + diphosphate. Its function is as follows. Catalyzes the attachment of proline to tRNA(Pro) in a two-step reaction: proline is first activated by ATP to form Pro-AMP and then transferred to the acceptor end of tRNA(Pro). As ProRS can inadvertently accommodate and process non-cognate amino acids such as alanine and cysteine, to avoid such errors it has two additional distinct editing activities against alanine. One activity is designated as 'pretransfer' editing and involves the tRNA(Pro)-independent hydrolysis of activated Ala-AMP. The other activity is designated 'posttransfer' editing and involves deacylation of mischarged Ala-tRNA(Pro). The misacylated Cys-tRNA(Pro) is not edited by ProRS. The polypeptide is Proline--tRNA ligase (Streptococcus pyogenes serotype M1).